The sequence spans 750 residues: Photosystem I P700 chlorophyll a apoprotein A1 (750 aa).

Transmembrane regions (helical) follow at residues 70-93 (VFSA…FHGA), 156-179 (LYCT…FHYH), 195-219 (LNHH…HVSL), 291-309 (IAHH…GHMY), 346-369 (WHAQ…HHMY), 385-411 (LSLF…IFMV), 433-455 (AIIS…LYIH), and 531-549 (FLVH…LILL). [4Fe-4S] cluster is bound by residues Cys-573 and Cys-582. Transmembrane regions (helical) follow at residues 589–610 (HVFL…HFSW) and 664–686 (LSAY…MFLF). Residue His-675 coordinates chlorophyll a'. 2 residues coordinate chlorophyll a: Met-683 and Tyr-691. Residue Trp-692 participates in phylloquinone binding. Residues 724–744 (AVGVTHYLLGGIATTWAFFLA) form a helical membrane-spanning segment.

The protein belongs to the PsaA/PsaB family. The PsaA/B heterodimer binds the P700 chlorophyll special pair and subsequent electron acceptors. PSI consists of a core antenna complex that captures photons, and an electron transfer chain that converts photonic excitation into a charge separation. The eukaryotic PSI reaction center is composed of at least 11 subunits. It depends on P700 is a chlorophyll a/chlorophyll a' dimer, A0 is one or more chlorophyll a, A1 is one or both phylloquinones and FX is a shared 4Fe-4S iron-sulfur center. as a cofactor.

It localises to the plastid. Its subcellular location is the chloroplast thylakoid membrane. The enzyme catalyses reduced [plastocyanin] + hnu + oxidized [2Fe-2S]-[ferredoxin] = oxidized [plastocyanin] + reduced [2Fe-2S]-[ferredoxin]. Its function is as follows. PsaA and PsaB bind P700, the primary electron donor of photosystem I (PSI), as well as the electron acceptors A0, A1 and FX. PSI is a plastocyanin-ferredoxin oxidoreductase, converting photonic excitation into a charge separation, which transfers an electron from the donor P700 chlorophyll pair to the spectroscopically characterized acceptors A0, A1, FX, FA and FB in turn. Oxidized P700 is reduced on the lumenal side of the thylakoid membrane by plastocyanin. The polypeptide is Photosystem I P700 chlorophyll a apoprotein A1 (Nicotiana sylvestris (Wood tobacco)).